The primary structure comprises 80 residues: UPF0248 protein MJ1316 (80 aa).

This sequence belongs to the UPF0248 family.

The chain is UPF0248 protein MJ1316 from Methanocaldococcus jannaschii (strain ATCC 43067 / DSM 2661 / JAL-1 / JCM 10045 / NBRC 100440) (Methanococcus jannaschii).